A 98-amino-acid chain; its full sequence is NADH-ubiquinone oxidoreductase chain 4L (98 aa).

3 helical membrane-spanning segments follow: residues 1 to 21 (MSMV…GMLV), 29 to 49 (SLLC…VTIL), and 61 to 81 (IILL…LVMV).

This sequence belongs to the complex I subunit 4L family. In terms of assembly, core subunit of respiratory chain NADH dehydrogenase (Complex I) which is composed of 45 different subunits.

It is found in the mitochondrion inner membrane. It carries out the reaction a ubiquinone + NADH + 5 H(+)(in) = a ubiquinol + NAD(+) + 4 H(+)(out). Its function is as follows. Core subunit of the mitochondrial membrane respiratory chain NADH dehydrogenase (Complex I) which catalyzes electron transfer from NADH through the respiratory chain, using ubiquinone as an electron acceptor. Part of the enzyme membrane arm which is embedded in the lipid bilayer and involved in proton translocation. This Odobenus rosmarus rosmarus (Atlantic walrus) protein is NADH-ubiquinone oxidoreductase chain 4L (MT-ND4L).